The primary structure comprises 280 residues: Killer cell lectin-like receptor 7 (280 aa).

The Cytoplasmic segment spans residues 1–44; sequence MSEQEVTYSTVRFHESSRLQKLVRTEEPQRPREACYREYSVPWK. The chain crosses the membrane as a helical; Signal-anchor for type II membrane protein span at residues 45–66; sequence LIVIACGILCFLLLVTVALLAI. Topologically, residues 67-280 are extracellular; sequence TIFQHSQQKH…CGKRLDKFPH (214 aa). N104 carries an N-linked (GlcNAc...) asparagine glycan. A C-type lectin domain is found at 156–275; that stretch reads GFEKYWFCYG…SYICICGKRL (120 aa). Disulfide bonds link C163-C168, C181-C269, C185-C271, and C250-C263. An N-linked (GlcNAc...) asparagine glycan is attached at N239.

Homodimer; disulfide-linked.

It is found in the membrane. Its function is as follows. Receptor on natural killer (NK) cells for class I MHC. This Mus musculus (Mouse) protein is Killer cell lectin-like receptor 7 (Klra7).